We begin with the raw amino-acid sequence, 540 residues long: Ribonuclease Y (540 aa).

A helical transmembrane segment spans residues Thr-4–Tyr-24. In terms of domain architecture, KH spans Thr-230 to Leu-293. The region spanning Val-356–Ala-449 is the HD domain.

It belongs to the RNase Y family.

Its subcellular location is the cell membrane. Its function is as follows. Endoribonuclease that initiates mRNA decay. This is Ribonuclease Y from Lactobacillus gasseri (strain ATCC 33323 / DSM 20243 / BCRC 14619 / CIP 102991 / JCM 1131 / KCTC 3163 / NCIMB 11718 / NCTC 13722 / AM63).